The primary structure comprises 268 residues: Tryptophan synthase alpha chain (268 aa).

Active-site proton acceptor residues include Glu49 and Asp60.

This sequence belongs to the TrpA family. In terms of assembly, tetramer of two alpha and two beta chains.

It catalyses the reaction (1S,2R)-1-C-(indol-3-yl)glycerol 3-phosphate + L-serine = D-glyceraldehyde 3-phosphate + L-tryptophan + H2O. Its pathway is amino-acid biosynthesis; L-tryptophan biosynthesis; L-tryptophan from chorismate: step 5/5. Functionally, the alpha subunit is responsible for the aldol cleavage of indoleglycerol phosphate to indole and glyceraldehyde 3-phosphate. The polypeptide is Tryptophan synthase alpha chain (Yersinia pestis bv. Antiqua (strain Antiqua)).